The primary structure comprises 577 residues: Methionine--tRNA ligase (577 aa).

The 'HIGH' region signature appears at 21–31; it reads PYANGPLHVGH. Zn(2+) contacts are provided by Cys-153, Cys-156, Cys-166, and Cys-169. Positions 355–359 match the 'KMSKS' region motif; sequence QMSTS. Thr-358 serves as a coordination point for ATP.

It belongs to the class-I aminoacyl-tRNA synthetase family. MetG type 1 subfamily. In terms of assembly, monomer. Zn(2+) serves as cofactor.

It is found in the cytoplasm. It carries out the reaction tRNA(Met) + L-methionine + ATP = L-methionyl-tRNA(Met) + AMP + diphosphate. In terms of biological role, is required not only for elongation of protein synthesis but also for the initiation of all mRNA translation through initiator tRNA(fMet) aminoacylation. The polypeptide is Methionine--tRNA ligase (Rubrobacter xylanophilus (strain DSM 9941 / JCM 11954 / NBRC 16129 / PRD-1)).